The chain runs to 187 residues: Calcium and integrin-binding family member 3 (187 aa).

3 EF-hand domains span residues 66-101 (KDNPFRQRIAQVFSEDGDGHMTLDNFLDMFSVMSEM), 103-138 (PRDLKAYYAFKIYDFNNDDYICAWDLEQTVTKLTRG), and 144-179 (EVSLVCEKVLDEADGDHDGRLSLEDFQNMILRAPDF). Asp-116, Asn-118, Asp-120, Tyr-122, Asp-127, Asp-157, Asp-159, Asp-161, Arg-163, and Asp-168 together coordinate Ca(2+).

In terms of assembly, monomer and homodimer. Interacts with ITGA2B (via C-terminus cytoplasmic tail region); the interaction is stabilized/increased in a calcium and magnesium-dependent manner. Interacts with TMC1.

Its function is as follows. Acts a an auxiliary subunit of the sensory mechanoelectrical transduction (MET) channel in hair cells. Plays a role in regulating hair cell MET channel localization and function. The chain is Calcium and integrin-binding family member 3 (CIB3) from Homo sapiens (Human).